Here is a 425-residue protein sequence, read N- to C-terminus: Proteinase-activated receptor 1 (425 aa).

Positions 1 to 21 (MGPRRLLLVAACLCLCGPLLS) are cleaved as a signal peptide. Positions 22–41 (ARTRARRPASKATNATLDPR) are cleaved as a propeptide — removed for receptor activation. N-linked (GlcNAc...) asparagine glycosylation is found at N35, N62, and N75. Residues 42–102 (SFLLRNPNDK…SGYLTSSWLT (61 aa)) are Extracellular-facing. Residues 103–128 (LFVPSVYTGVFVVSLPVNIMAIVVFI) traverse the membrane as a helical segment. Residues 129 to 137 (LKMKVKKPA) lie on the Cytoplasmic side of the membrane. The chain crosses the membrane as a helical span at residues 138-157 (VVYMLHLATADVLFVSVLPF). At 158 to 176 (KISYYLSGSDWQFGSELCR) the chain is on the extracellular side. Cysteines 175 and 254 form a disulfide. The helical transmembrane segment at 177 to 198 (FVTAAFYCNMYASILLMTVISI) threads the bilayer. Over 199-218 (DRFLAVVYPMQSLSWRTLGR) the chain is Cytoplasmic. A helical transmembrane segment spans residues 219–239 (ASFTCLAIWALAIAGVVPLLL). Topologically, residues 240–268 (KEQTIQVPGLNITTCHDVLNETLLEGYYA) are extracellular. N-linked (GlcNAc...) asparagine glycans are attached at residues N250 and N259. The chain crosses the membrane as a helical span at residues 269–288 (YYFSAFSAVFFFVPLIISTV). At 289 to 311 (CYVSIIRCLSSSTVANRSKKSRA) the chain is on the cytoplasmic side. A helical membrane pass occupies residues 312-334 (LFLSAAVFCIFIICFGPTNILLI). The Extracellular portion of the chain corresponds to 335-350 (AHYSFLSHTSTTEAAY). A helical transmembrane segment spans residues 351 to 374 (FAYLLCVCVSSISCCIDPLIYYYA). Over 375-425 (SSECQRYVYSILCCKESSDPSSSNSSGQLMASKMDTCSSNLNNSIYKKLLT) the chain is Cytoplasmic. S418 carries the phosphoserine modification.

This sequence belongs to the G-protein coupled receptor 1 family. Post-translationally, proteolytic cleavage by thrombin generates a new N-terminus that functions as a tethered ligand. Also proteolytically cleaved by cathepsin CTSG. Cleavage at 41-Arg-|-Ser-42 by CTSG results in receptor activation while cleavage at 55-Phe-|-Trp-56 results in inhibition of receptor activation. In terms of processing, phosphorylated in the C-terminal tail; probably mediating desensitization prior to the uncoupling and internalization of the receptor.

It localises to the cell membrane. In terms of biological role, high affinity receptor that binds the activated thrombin, leading to calcium release from intracellular stores. The thrombin-activated receptor signaling pathway is mediated through PTX-insensitive G proteins, activation of phospholipase C resulting in the production of 1D-myo-inositol 1,4,5-trisphosphate (InsP3) which binds to InsP3 receptors causing calcium release from the stores. In astrocytes, the calcium released into the cytosol allows the Ca(2+)-dependent release of L-glutamate into the synaptic cleft through BEST1, that targets the neuronal postsynaptic GRIN2A/NMDAR receptor resulting in the synaptic plasticity regulation. May play a role in platelets activation and in vascular development. Mediates up-regulation of pro-inflammatory cytokines, such as MCP-1/CCL2 and IL6, triggered by coagulation factor Xa (F10) in cardiac fibroblasts and umbilical vein endothelial cells. This chain is Proteinase-activated receptor 1, found in Papio hamadryas (Hamadryas baboon).